The chain runs to 298 residues: Zinc-alpha-2-glycoprotein (298 aa).

Positions M1–P20 are cleaved as a signal peptide. Q21 is modified (pyrrolidone carboxylic acid). N109 is a glycosylation site (N-linked (GlcNAc...) (complex) asparagine). N112 carries an N-linked (GlcNAc...) asparagine glycan. Cystine bridges form between C123-C186 and C225-C280. An N-linked (GlcNAc...) (complex) asparagine glycan is attached at N128. The Ig-like C1-type domain maps to P207–V292. N259 carries N-linked (GlcNAc...) asparagine glycosylation.

The protein belongs to the MHC class I family. In terms of assembly, interacts with PIP. Post-translationally, N-glycosylated. N-glycan at Asn-128: Hex5HexNAc4. As to expression, blood plasma, seminal plasma, urine, saliva, sweat, epithelial cells of various human glands, liver.

Its subcellular location is the secreted. In terms of biological role, stimulates lipid degradation in adipocytes and causes the extensive fat losses associated with some advanced cancers. May bind polyunsaturated fatty acids. This is Zinc-alpha-2-glycoprotein (AZGP1) from Homo sapiens (Human).